The primary structure comprises 234 residues: Phosphoribosylaminoimidazole-succinocarboxamide synthase (234 aa).

This sequence belongs to the SAICAR synthetase family.

It carries out the reaction 5-amino-1-(5-phospho-D-ribosyl)imidazole-4-carboxylate + L-aspartate + ATP = (2S)-2-[5-amino-1-(5-phospho-beta-D-ribosyl)imidazole-4-carboxamido]succinate + ADP + phosphate + 2 H(+). It participates in purine metabolism; IMP biosynthesis via de novo pathway; 5-amino-1-(5-phospho-D-ribosyl)imidazole-4-carboxamide from 5-amino-1-(5-phospho-D-ribosyl)imidazole-4-carboxylate: step 1/2. This Pyrobaculum aerophilum (strain ATCC 51768 / DSM 7523 / JCM 9630 / CIP 104966 / NBRC 100827 / IM2) protein is Phosphoribosylaminoimidazole-succinocarboxamide synthase.